The following is a 311-amino-acid chain: Malate dehydrogenase (311 aa).

NAD(+)-binding positions include 7-13 and Asp34; that span reads GAAGGIG. 2 residues coordinate substrate: Arg81 and Arg87. NAD(+)-binding positions include Asn94 and 117 to 119; that span reads ITN. Residues Asn119 and Arg153 each contribute to the substrate site. Catalysis depends on His177, which acts as the Proton acceptor. Met227 provides a ligand contact to NAD(+).

This sequence belongs to the LDH/MDH superfamily. MDH type 1 family. Homodimer.

It catalyses the reaction (S)-malate + NAD(+) = oxaloacetate + NADH + H(+). Its function is as follows. Catalyzes the reversible oxidation of malate to oxaloacetate. This Shewanella amazonensis (strain ATCC BAA-1098 / SB2B) protein is Malate dehydrogenase.